The following is a 355-amino-acid chain: 3-dehydroquinate synthase (355 aa).

Residues 71–76 (EGEERK), 105–109 (GVVGD), 129–130 (TS), lysine 142, and lysine 151 each bind NAD(+). Zn(2+) contacts are provided by glutamate 184, histidine 246, and histidine 263.

This sequence belongs to the sugar phosphate cyclases superfamily. Dehydroquinate synthase family. The cofactor is Co(2+). Zn(2+) is required as a cofactor. It depends on NAD(+) as a cofactor.

It localises to the cytoplasm. It catalyses the reaction 7-phospho-2-dehydro-3-deoxy-D-arabino-heptonate = 3-dehydroquinate + phosphate. It participates in metabolic intermediate biosynthesis; chorismate biosynthesis; chorismate from D-erythrose 4-phosphate and phosphoenolpyruvate: step 2/7. Functionally, catalyzes the conversion of 3-deoxy-D-arabino-heptulosonate 7-phosphate (DAHP) to dehydroquinate (DHQ). In Streptococcus pneumoniae (strain ATCC 700669 / Spain 23F-1), this protein is 3-dehydroquinate synthase.